The following is a 332-amino-acid chain: Thiamine thiazole synthase (332 aa).

Substrate contacts are provided by residues Cys-87, 108–109 (EA), Gly-116, and Val-184. The residue at position 221 (Cys-221) is a 2,3-didehydroalanine (Cys). Residues Asp-223, His-238, Met-290, and 300-302 (RMG) contribute to the substrate site.

The protein belongs to the THI4 family. In terms of assembly, homooctamer. Fe cation is required as a cofactor. In terms of processing, during the catalytic reaction, a sulfide is transferred from Cys-221 to a reaction intermediate, generating a dehydroalanine residue.

The protein resides in the cytoplasm. It localises to the nucleus. It carries out the reaction [ADP-thiazole synthase]-L-cysteine + glycine + NAD(+) = [ADP-thiazole synthase]-dehydroalanine + ADP-5-ethyl-4-methylthiazole-2-carboxylate + nicotinamide + 3 H2O + 2 H(+). Its function is as follows. Involved in biosynthesis of the thiamine precursor thiazole. Catalyzes the conversion of NAD and glycine to adenosine diphosphate 5-(2-hydroxyethyl)-4-methylthiazole-2-carboxylic acid (ADT), an adenylated thiazole intermediate. The reaction includes an iron-dependent sulfide transfer from a conserved cysteine residue of the protein to a thiazole intermediate. The enzyme can only undergo a single turnover, which suggests it is a suicide enzyme. May have additional roles in adaptation to various stress conditions and in DNA damage tolerance. The protein is Thiamine thiazole synthase of Aspergillus fumigatus (strain ATCC MYA-4609 / CBS 101355 / FGSC A1100 / Af293) (Neosartorya fumigata).